A 670-amino-acid chain; its full sequence is Probable metal-nicotianamine transporter YSL4 (670 aa).

13 helical membrane passes run 35–55 (ITIR…IITH), 59–79 (LTIG…FFFI), 107–127 (CVVS…LIAM), 151–171 (GLWW…FCLV), 273–293 (LVNC…WPFI), 318–338 (VFIA…KIIV), 389–409 (FAVS…PLIF), 416–436 (FVLC…YGAG), 450–470 (GLFI…GLAA), 507–527 (LGTA…WTAF), 559–579 (PKHC…VNLI), 601–621 (FYIG…MLVW), and 636–656 (VASG…ILSI).

This sequence belongs to the YSL (TC 2.A.67.2) family.

The protein localises to the membrane. May be involved in the transport of nicotianamine-chelated metals. The protein is Probable metal-nicotianamine transporter YSL4 (YSL4) of Arabidopsis thaliana (Mouse-ear cress).